Here is a 534-residue protein sequence, read N- to C-terminus: Kelch repeat and BTB domain-containing protein 4 (534 aa).

Residues 1–25 (MKGGNADSWQREKLASMESPEEPGA) are disordered. One can recognise a BTB domain in the interval 61–128 (ADVTISVEGR…IYHGTVKLRA (68 aa)). Positions 163 to 255 (CLQVMWLADR…SLKEIGENVH (93 aa)) constitute a BACK domain. 5 Kelch repeats span residues 255–301 (HIYL…KHGG), 302–344 (DLYV…SVPG), 347–394 (AIYS…NLNG), 396–446 (IYLL…VHKD), and 448–497 (VFIV…VFRD).

As to quaternary structure, component of the BCR(KBTBD4) E3 ubiquitin ligase complex, at least composed of CUL3, KBTBD4 and RBX1.

Functionally, substrate-specific adapter of a BCR (BTB-CUL3-RBX1) E3 ubiquitin ligase complex which targets CoREST corepressor complex components RCOR1, KDM1A/LSD1 and HDAC2 for proteasomal degradation. RCOR1 is likely to be the primary target while degradation of KDM1A and HDAC2 is likely due to their association with RCOR1. Also targets RCOR3, MIER2 and MIER3 for proteasomal degradation as well as associated proteins ZNF217 and RREB1. Degradation is dependent on the presence of an ELM2 domain in the target proteins. This is Kelch repeat and BTB domain-containing protein 4 (KBTBD4) from Homo sapiens (Human).